We begin with the raw amino-acid sequence, 155 residues long: F-box only protein 48 (155 aa).

A disordered region spans residues 1–27 (MHKNSKRNNNLRVSHTEANSVDAEKEK). A compositionally biased stretch (polar residues) spans 7-19 (RNNNLRVSHTEAN). The F-box domain maps to 32 to 79 (NNFFELLPAEITFKIFSQLDIRSLCRASLTCRSWNDTIRNSDSLWKPH).

The protein is F-box only protein 48 (FBXO48) of Homo sapiens (Human).